Consider the following 352-residue polypeptide: Speedy protein E16 (352 aa).

A disordered region spans residues 1-90 (MDRTETRFRK…EPEKELAPEP (90 aa)). The segment covering 18–40 (ITTSRQPHPQNEQSPQRSTSGYS) has biased composition (polar residues). Over residues 76–90 (DESEEEPEKELAPEP) the composition is skewed to acidic residues.

Belongs to the Speedy/Ringo family.

This Homo sapiens (Human) protein is Speedy protein E16.